Reading from the N-terminus, the 436-residue chain is Trigger factor (436 aa).

In terms of domain architecture, PPIase FKBP-type spans 162–247 (GDRVIIDFEG…LNNVSEPTLP (86 aa)).

The protein belongs to the FKBP-type PPIase family. Tig subfamily.

The protein localises to the cytoplasm. The enzyme catalyses [protein]-peptidylproline (omega=180) = [protein]-peptidylproline (omega=0). Involved in protein export. Acts as a chaperone by maintaining the newly synthesized protein in an open conformation. Functions as a peptidyl-prolyl cis-trans isomerase. This is Trigger factor from Neisseria gonorrhoeae (strain ATCC 700825 / FA 1090).